Here is a 180-residue protein sequence, read N- to C-terminus: Large ribosomal subunit protein uL5c (180 aa).

It belongs to the universal ribosomal protein uL5 family. As to quaternary structure, part of the 50S ribosomal subunit; contacts the 5S rRNA.

The protein localises to the plastid. Its subcellular location is the chloroplast. Its function is as follows. Binds 5S rRNA, forms part of the central protuberance of the 50S subunit. This is Large ribosomal subunit protein uL5c (rpl5) from Stigeoclonium helveticum (Green alga).